Reading from the N-terminus, the 135-residue chain is Small ribosomal subunit protein uS11 (135 aa).

Positions 1–22 (MPPKSRTAAGAKKVRRKEKKNV) are disordered.

It belongs to the universal ribosomal protein uS11 family. Part of the 30S ribosomal subunit. Interacts with proteins S7 and S18. Binds to IF-3.

Functionally, located on the platform of the 30S subunit, it bridges several disparate RNA helices of the 16S rRNA. Forms part of the Shine-Dalgarno cleft in the 70S ribosome. The sequence is that of Small ribosomal subunit protein uS11 from Nocardioides sp. (strain ATCC BAA-499 / JS614).